The chain runs to 134 residues: NADH-quinone oxidoreductase subunit A (134 aa).

3 consecutive transmembrane segments (helical) span residues 14–34, 66–86, and 96–116; these read FFMF…LSWI, FYLI…LYAW, and IGFS…FYLV.

Belongs to the complex I subunit 3 family. NDH-1 is composed of 13 different subunits. Subunits NuoA, H, J, K, L, M, N constitute the membrane sector of the complex.

It localises to the cell membrane. It carries out the reaction a quinone + NADH + 5 H(+)(in) = a quinol + NAD(+) + 4 H(+)(out). Its function is as follows. NDH-1 shuttles electrons from NADH, via FMN and iron-sulfur (Fe-S) centers, to quinones in the respiratory chain. The immediate electron acceptor for the enzyme in this species is believed to be ubiquinone. Couples the redox reaction to proton translocation (for every two electrons transferred, four hydrogen ions are translocated across the cytoplasmic membrane), and thus conserves the redox energy in a proton gradient. In Buchnera aphidicola subsp. Acyrthosiphon pisum (strain APS) (Acyrthosiphon pisum symbiotic bacterium), this protein is NADH-quinone oxidoreductase subunit A.